The following is a 299-amino-acid chain: Probable lipid kinase YegS (299 aa).

Residues 2–133 form the DAGKc domain; sequence AEFPASLLIL…IDMAQVNKQT (132 aa). ATP-binding positions include Thr40, 66 to 72, and Thr95; that span reads GDGTINE. Residues Leu215, Asp218, and Leu220 each coordinate Mg(2+). Glu271 serves as the catalytic Proton acceptor.

Belongs to the diacylglycerol/lipid kinase family. YegS lipid kinase subfamily. Mg(2+) is required as a cofactor. Requires Ca(2+) as cofactor.

Its subcellular location is the cytoplasm. Functionally, probably phosphorylates lipids; the in vivo substrate is unknown. The polypeptide is Probable lipid kinase YegS (Escherichia coli (strain K12 / MC4100 / BW2952)).